Reading from the N-terminus, the 308-residue chain is Staphylococcal superantigen-like 4 (308 aa).

An N-terminal signal peptide occupies residues 1 to 30; the sequence is MKITTIAKTSLALGLLTTGVITTTTQAANA. The tract at residues 32-117 is disordered; it reads TLSSTKVEAP…TTKQVPTEIN (86 aa). 2 stretches are compositionally biased toward polar residues: residues 33–47 and 55–76; these read LSST…TPPS and SKPN…TANA. Residues 77 to 93 show a composition bias toward low complexity; it reads TTPPSTKVTTPPSTNTP. The span at 94-114 shows a compositional bias: polar residues; the sequence is QPMQSTKSDTPQSPTTKQVPT. Positions 180 to 278 are sialyl Lewis X-binding; sequence VDVFVVLEEN…VIKMKNGGKY (99 aa).

This sequence belongs to the staphylococcal/streptococcal toxin family.

The protein resides in the secreted. Functionally, secreted protein that plays a role in immune innate response inhibition by interfering with host TLR2-mediated pathway. In Staphylococcus aureus (strain NCTC 8325 / PS 47), this protein is Staphylococcal superantigen-like 4.